The chain runs to 410 residues: 3-phosphoshikimate 1-carboxyvinyltransferase (410 aa).

3-phosphoshikimate-binding residues include Lys-27, Ser-28, and Arg-32. Lys-27 serves as a coordination point for phosphoenolpyruvate. Phosphoenolpyruvate-binding residues include Gly-91 and Arg-119. 6 residues coordinate 3-phosphoshikimate: Ser-161, Ser-162, Gln-163, Asp-297, Gln-319, and Lys-323. Residue Gln-163 coordinates phosphoenolpyruvate. Residue Asp-297 is the Proton acceptor of the active site. Phosphoenolpyruvate is bound by residues Arg-327, Arg-368, and Lys-394.

It belongs to the EPSP synthase family. Monomer.

The protein localises to the cytoplasm. It catalyses the reaction 3-phosphoshikimate + phosphoenolpyruvate = 5-O-(1-carboxyvinyl)-3-phosphoshikimate + phosphate. It participates in metabolic intermediate biosynthesis; chorismate biosynthesis. Catalyzes the transfer of the enolpyruvyl moiety of phosphoenolpyruvate (PEP) to the 5-hydroxyl of shikimate-3-phosphate (S3P) to produce enolpyruvyl shikimate-3-phosphate and inorganic phosphate. This chain is 3-phosphoshikimate 1-carboxyvinyltransferase, found in Pyrococcus abyssi (strain GE5 / Orsay).